The sequence spans 263 residues: uncharacterized protein (263 aa).

This sequence belongs to the flavoredoxin family. It depends on FMN as a cofactor.

This is an uncharacterized protein from Aeropyrum pernix (strain ATCC 700893 / DSM 11879 / JCM 9820 / NBRC 100138 / K1).